Here is a 238-residue protein sequence, read N- to C-terminus: Pyridoxine 5'-phosphate synthase (238 aa).

Asn6 is a binding site for 3-amino-2-oxopropyl phosphate. 8–9 is a binding site for 1-deoxy-D-xylulose 5-phosphate; that stretch reads DH. Position 17 (Arg17) interacts with 3-amino-2-oxopropyl phosphate. The Proton acceptor role is filled by His42. Positions 44 and 49 each coordinate 1-deoxy-D-xylulose 5-phosphate. Glu69 serves as the catalytic Proton acceptor. Thr99 lines the 1-deoxy-D-xylulose 5-phosphate pocket. His190 (proton donor) is an active-site residue. Residues Gly191 and 212–213 each bind 3-amino-2-oxopropyl phosphate; that span reads GH.

This sequence belongs to the PNP synthase family. In terms of assembly, homooctamer; tetramer of dimers.

Its subcellular location is the cytoplasm. The enzyme catalyses 3-amino-2-oxopropyl phosphate + 1-deoxy-D-xylulose 5-phosphate = pyridoxine 5'-phosphate + phosphate + 2 H2O + H(+). It participates in cofactor biosynthesis; pyridoxine 5'-phosphate biosynthesis; pyridoxine 5'-phosphate from D-erythrose 4-phosphate: step 5/5. In terms of biological role, catalyzes the complicated ring closure reaction between the two acyclic compounds 1-deoxy-D-xylulose-5-phosphate (DXP) and 3-amino-2-oxopropyl phosphate (1-amino-acetone-3-phosphate or AAP) to form pyridoxine 5'-phosphate (PNP) and inorganic phosphate. This chain is Pyridoxine 5'-phosphate synthase, found in Chlorobium phaeobacteroides (strain BS1).